The primary structure comprises 332 residues: Eukaryotic translation initiation factor 3 subunit I (332 aa).

WD repeat units lie at residues 8 to 47 (GHER…GTYH), 48 to 87 (GHQG…LLHT), 144 to 182 (DESK…LLSS), and 279 to 318 (GHFG…FDFM).

This sequence belongs to the eIF-3 subunit I family. As to quaternary structure, component of the eukaryotic translation initiation factor 3 (eIF-3) complex.

The protein resides in the cytoplasm. Component of the eukaryotic translation initiation factor 3 (eIF-3) complex, which is involved in protein synthesis of a specialized repertoire of mRNAs and, together with other initiation factors, stimulates binding of mRNA and methionyl-tRNAi to the 40S ribosome. The eIF-3 complex specifically targets and initiates translation of a subset of mRNAs involved in cell proliferation. In Phaeosphaeria nodorum (strain SN15 / ATCC MYA-4574 / FGSC 10173) (Glume blotch fungus), this protein is Eukaryotic translation initiation factor 3 subunit I.